Here is a 184-residue protein sequence, read N- to C-terminus: UPF0316 protein BPUM_0594 (184 aa).

The next 3 helical transmembrane spans lie at 9–29 (AFTMVLIILVINIVYVSFSTM), 41–61 (AAAFAGTIEMLIYVIGLSIVL), and 67–87 (IQNVIAYALGYGMGIIVGMKI).

It belongs to the UPF0316 family.

Its subcellular location is the cell membrane. The protein is UPF0316 protein BPUM_0594 of Bacillus pumilus (strain SAFR-032).